Here is an 861-residue protein sequence, read N- to C-terminus: Putative glutamate--cysteine ligase 2-2 (861 aa).

The segment at 1–372 is carboxylate-amine ligase; sequence MSDARIVAVG…RDVPPAGAAA (372 aa). The tract at residues 373-861 is unknown; the sequence is ALGSAPAVSA…GSKDTWIPRR (489 aa).

The protein in the N-terminal section; belongs to the glutamate--cysteine ligase type 2 family. YbdK subfamily.

It catalyses the reaction L-cysteine + L-glutamate + ATP = gamma-L-glutamyl-L-cysteine + ADP + phosphate + H(+). ATP-dependent carboxylate-amine ligase which exhibits weak glutamate--cysteine ligase activity. This chain is Putative glutamate--cysteine ligase 2-2, found in Frankia casuarinae (strain DSM 45818 / CECT 9043 / HFP020203 / CcI3).